Here is a 1109-residue protein sequence, read N- to C-terminus: Protein translocase subunit SecA (1109 aa).

Residues Q175, 193-197, and D695 each bind ATP; that span reads GEGKT. Positions 1038–1109 are disordered; it reads VRQAAPEQRQ…KYKNCHGRNS (72 aa). 2 stretches are compositionally biased toward basic and acidic residues: residues 1045-1059 and 1071-1088; these read QRQDMSKYREQKQDL and DTREAVKREPIRAEKTVG. Zn(2+)-binding residues include C1093, C1095, C1104, and H1105. Basic residues predominate over residues 1099 to 1109; sequence KKYKNCHGRNS.

This sequence belongs to the SecA family. As to quaternary structure, monomer and homodimer. Part of the essential Sec protein translocation apparatus which comprises SecA, SecYEG and auxiliary proteins SecDF. Other proteins may also be involved. Zn(2+) is required as a cofactor.

It localises to the cell inner membrane. It is found in the cytoplasm. The enzyme catalyses ATP + H2O + cellular proteinSide 1 = ADP + phosphate + cellular proteinSide 2.. Functionally, part of the Sec protein translocase complex. Interacts with the SecYEG preprotein conducting channel. Has a central role in coupling the hydrolysis of ATP to the transfer of proteins into and across the cell membrane, serving as an ATP-driven molecular motor driving the stepwise translocation of polypeptide chains across the membrane. The chain is Protein translocase subunit SecA from Bacteroides fragilis (strain ATCC 25285 / DSM 2151 / CCUG 4856 / JCM 11019 / LMG 10263 / NCTC 9343 / Onslow / VPI 2553 / EN-2).